The sequence spans 266 residues: Glucosamine-6-phosphate deaminase (266 aa).

Asp72 serves as the catalytic Proton acceptor; for enolization step. Asp141 serves as the catalytic For ring-opening step. Residue His143 is the Proton acceptor; for ring-opening step of the active site. The active-site For ring-opening step is Glu148.

The protein belongs to the glucosamine/galactosamine-6-phosphate isomerase family. NagB subfamily. As to quaternary structure, homohexamer.

It carries out the reaction alpha-D-glucosamine 6-phosphate + H2O = beta-D-fructose 6-phosphate + NH4(+). Its pathway is amino-sugar metabolism; N-acetylneuraminate degradation; D-fructose 6-phosphate from N-acetylneuraminate: step 5/5. Allosterically activated by N-acetylglucosamine 6-phosphate (GlcNAc6P). In terms of biological role, catalyzes the reversible isomerization-deamination of glucosamine 6-phosphate (GlcN6P) to form fructose 6-phosphate (Fru6P) and ammonium ion. The protein is Glucosamine-6-phosphate deaminase of Aliivibrio salmonicida (strain LFI1238) (Vibrio salmonicida (strain LFI1238)).